An 805-amino-acid chain; its full sequence is Ubiquitin carboxyl-terminal hydrolase 10 (805 aa).

The tract at residues 139 to 170 (DGSGNADSDGTSGTGQRERKKKKKRPPGYYSY) is disordered. The segment covering 143 to 153 (NADSDGTSGTG) has biased composition (polar residues). Residues 422-802 (RGLINKGNWC…TAYLLYYRRV (381 aa)) enclose the USP domain. The Nucleophile role is filled by Cys431. The interval 561–593 (HINNGPDPVSEKEEINKDEQEGSDEEWEQVGPR) is disordered. Residues 569-580 (VSEKEEINKDEQ) show a composition bias toward basic and acidic residues. The active-site Proton acceptor is the His756.

The protein belongs to the peptidase C19 family. USP10 subfamily.

It localises to the cytoplasm. It is found in the nucleus. The catalysed reaction is Thiol-dependent hydrolysis of ester, thioester, amide, peptide and isopeptide bonds formed by the C-terminal Gly of ubiquitin (a 76-residue protein attached to proteins as an intracellular targeting signal).. Functionally, hydrolase that can remove conjugated ubiquitin from target proteins such as p53/tp53, rps2/us5, rps3/us3, rps10/eS10, becn1, snx3 and cftr. Acts as an essential regulator of p53/tp53 stability: in unstressed cells, specifically deubiquitinates p53/tp53 in the cytoplasm, leading to counteracts MDM2 action and stabilize p53/tp53. Following DNA damage, translocates to the nucleus and deubiquitinates p53/tp53, leading to regulate the p53/TP53-dependent DNA damage response. Component of a regulatory loop that controls autophagy and p53/tp53 levels. Plays a key role in 40S ribosome subunit recycling when a ribosome has stalled during translation: acts both by inhibiting formation of stress granules, which store stalled translation pre-initiation complexes, and mediating deubiquitination of 40S ribosome subunits. Deubiquitinates cftr in early endosomes, enhancing its endocytic recycling. The sequence is that of Ubiquitin carboxyl-terminal hydrolase 10 (usp10) from Xenopus tropicalis (Western clawed frog).